We begin with the raw amino-acid sequence, 88 residues long: Secretion system apparatus protein SsaS (88 aa).

Transmembrane regions (helical) follow at residues 15–35 and 55–75; these read WIVL…GVIV and LLAI…ILLN.

This sequence belongs to the FliQ/MopD/SpaQ family.

It localises to the cell membrane. Functionally, part of a type III secretion system. The sequence is that of Secretion system apparatus protein SsaS (ssaS) from Salmonella typhimurium (strain LT2 / SGSC1412 / ATCC 700720).